Consider the following 223-residue polypeptide: Adenylate kinase (223 aa).

Residue 17–22 (GAGKGT) coordinates ATP. An NMP region spans residues 37–66 (STGDMLRSQVAKGTPLGVEAKKIMDQGGLV). Residues threonine 38, arginine 43, 64–66 (GLV), 93–96 (GFPR), and glutamine 100 contribute to the AMP site. Positions 134–171 (GRLVHPSSGRSYHKLFNPPKVEMTDDVTGEPLVQRSDD) are LID. ATP contacts are provided by residues arginine 135 and 144-145 (SY). Residues arginine 168 and arginine 179 each coordinate AMP. Glutamine 207 serves as a coordination point for ATP.

The protein belongs to the adenylate kinase family. AK2 subfamily. In terms of assembly, monomer.

It localises to the cytoplasm. It is found in the cytosol. The protein localises to the mitochondrion intermembrane space. It carries out the reaction AMP + ATP = 2 ADP. Its function is as follows. Catalyzes the reversible transfer of the terminal phosphate group between ATP and AMP. Plays an important role in cellular energy homeostasis and in adenine nucleotide metabolism. Adenylate kinase activity is critical for regulation of the phosphate utilization and the AMP de novo biosynthesis pathways. The protein is Adenylate kinase of Vanderwaltozyma polyspora (strain ATCC 22028 / DSM 70294 / BCRC 21397 / CBS 2163 / NBRC 10782 / NRRL Y-8283 / UCD 57-17) (Kluyveromyces polysporus).